The primary structure comprises 203 residues: Eukaryotic translation initiation factor isoform 4E (203 aa).

Low complexity predominate over residues 1–25 (MATETAGAVVESSSAATVPSPAPEA). The tract at residues 1–27 (MATETAGAVVESSSAATVPSPAPEAGS) is disordered. MRNA-binding positions include 47–52 (QGAAWG), lysine 79, and 97–98 (WE). A disulfide bridge links cysteine 102 with cysteine 141. 148–153 (RQRQDK) is an mRNA binding site.

It belongs to the eukaryotic initiation factor 4E family. In terms of assembly, EIF4F is a multi-subunit complex, the composition of which varies with external and internal environmental conditions. It is composed of at least EIF4A, EIF4E and EIF4G. EIF4E is also known to interact with other partners. In higher plants two isoforms of EIF4F have been identified, named isoform EIF4F and isoform EIF(iso)4F. Isoform EIF4F has subunits p220 and p26, whereas isoform EIF(iso)4F has subunits p82 and p28. (Microbial infection) Interacts with the potyvirus peanut stripe virus (PStV) helper component proteinase (HC-Pro) in the cytoplasm and with PStV viral genome-linked protein (VPg) in the nucleus; these interactions are possible in susceptible hosts but impaired in resistant plants. According to the redox status, the Cys-102-Cys-141 disulfide bridge may have a role in regulating protein function by affecting its ability to bind capped mRNA. Expressed ubiquitously with highest levels in young leaves and roots, and lowest levels in flowers.

It localises to the cytoplasm. It is found in the nucleus. In terms of biological role, component of the protein complex eIF4F, which is involved in the recognition of the mRNA cap, ATP-dependent unwinding of 5'-terminal secondary structure and recruitment of mRNA to the ribosome. Recognizes and binds the 7-methylguanosine-containing mRNA cap during an early step in the initiation of protein synthesis and facilitates ribosome binding by inducing the unwinding of the mRNAs secondary structures. Key component of recessive resistance to potyviruses such as peanut stripe virus (PStV). Its function is as follows. (Microbial infection) Susceptibility host factor required for viral infection by recruiting viral RNAs to the host ribosomal complex via an interaction with viral genome-linked protein (VPg). In Arachis hypogaea (Peanut), this protein is Eukaryotic translation initiation factor isoform 4E.